The primary structure comprises 1061 residues: Chimeric ERCC6-PGBD3 protein (1061 aa).

Residues 1 to 39 form a disordered region; the sequence is MPNEGIPHSSQTQEQDCLQSQPVSNNEEMAIKQESGGDG. Residues 8–27 are compositionally biased toward polar residues; that stretch reads HSSQTQEQDCLQSQPVSNNE. Ser-158 carries the phosphoserine modification. Residue Lys-255 forms a Glycyl lysine isopeptide (Lys-Gly) (interchain with G-Cter in SUMO2) linkage. Disordered regions lie at residues 287-323, 344-466, 494-521, and 537-573; these read KQGCNKRAARKAPAPVTPPAPVQNKNKPNKKARVLSK, GKVG…QRLS, VIQPPENATAPVSDEESGDEEGGTINNL, and SDAESDSDDPSYAPKDDSPDEVPSTFTVQQPPPSRRR. The span at 353–363 shows a compositional bias: basic and acidic residues; it reads RPWESDMRPEA. Acidic residues predominate over residues 364 to 392; it reads EGDSEGEESEYFPTEEEEEEEDDEVEGAE. Ser-429 and Ser-430 each carry phosphoserine. Positions 451 to 462 are enriched in basic and acidic residues; that stretch reads RYRDDGDEDYYK. The segment covering 506-515 has biased composition (acidic residues); that stretch reads SDEESGDEEG. A Phosphoserine modification is found at Ser-554.

As to expression, expressed in heart and oocytes, but not in granulosa cells (at protein level).

The protein localises to the nucleus. In terms of biological role, involved in repair of DNA damage following UV irradiation, acting either in the absence of ERCC6 or synergistically with ERCC6. Involved in the regulation of gene expression. In the absence of ERCC6, induces the expression of genes characteristic of interferon-like antiviral responses. This response is almost completely suppressed in the presence of ERCC6. In the presence of ERCC6, regulates the expression of genes involved in metabolism regulation, including IGFBP5 and IGFBP7. In vitro binds to PGBD3-related transposable elements, called MER85s; these non-autonomous 140 bp elements are characterized by the presence of PGBD3 terminal inverted repeats and the absence of internal transposase ORF. The sequence is that of Chimeric ERCC6-PGBD3 protein from Homo sapiens (Human).